The sequence spans 105 residues: UPF0145 protein GK1405 (105 aa).

It belongs to the UPF0145 family.

In Geobacillus kaustophilus (strain HTA426), this protein is UPF0145 protein GK1405.